A 258-amino-acid chain; its full sequence is MDDDHEQLVEELEAVEAIYPDLLSKKQEDGSIIVVKVPQHEYMTLQISFPTHYPSEEAPNVIEVGVCTSLAKRDLYDTKYLQHLFQEVMDSVFHRGSVCLFDFLTELDGVLYVEPEEETEPVQQSDIPTDPFEGWTASDPITDRGSTFMAFAAHVTSEEQAFAMLDLLKTDSKMRKANHVMSAWRIKQDGSAATYQDSDDDGETAAGSRMLHLITIMDVWNVIVVVARWFGGAHIGPDRFKHINSTAREAVVRAGFDS.

Residues glutamate 10–glutamate 114 enclose the RWD domain. Lysine 187 participates in a covalent cross-link: Glycyl lysine isopeptide (Lys-Gly) (interchain with G-Cter in ubiquitin).

It belongs to the IMPACT family. In terms of assembly, interacts (via N-terminus) with GCN1 (via C-terminus); this interaction reduces the GCN1-GCN20 complex formation and prevents the interaction of GCN1 with GCN2 protein kinase and GCN2 activation in amino acid-starved cells. Interacts (via C-terminus) with ACT1; this interaction occurs in a GCN1-independent manner. Interacts with RPL39; this interaction occurs in a GCN1-independent manner. Associates (via middle region) with ribosomes; this association occurs in a GCN1-independent manner and persists under amino acid starvation conditions.

It is found in the cytoplasm. It localises to the nucleus. Translational regulator that ensures constant high levels of translation under amino acid starvation. Plays a role as a negative regulator of the GCN2 kinase activity; impairs GCN1-mediated GCN2 activation, and hence GCN2-mediated eIF-2-alpha phosphorylation in amino acid-starved cells and subsequent down-regulation of protein synthesis. In normal conditions, it resides in a actin complex and has no activity. In Saccharomyces cerevisiae (strain ATCC 204508 / S288c) (Baker's yeast), this protein is Protein IMPACT homolog (YIH1).